The chain runs to 97 residues: Carboxypeptidase inhibitor (97 aa).

An N-terminal signal peptide occupies residues methionine 1 to alanine 22.

Its subcellular location is the secreted. Its function is as follows. Potent competitive inhibitor of metallo-carboxypeptidases CPA1, CPA2, CPB, CPN, and TAF1a. Also inhibits human CPA4. Accelerates fibrinolysis in vitro and may contribute to the maintenance of host blood liquidity during feeding. This chain is Carboxypeptidase inhibitor, found in Rhipicephalus bursa (Tick).